A 423-amino-acid polypeptide reads, in one-letter code: Probable sucrose-phosphatase 3b (423 aa).

The protein belongs to the sucrose phosphatase family. In terms of assembly, homodimer. The cofactor is Mg(2+).

The enzyme catalyses sucrose 6(F)-phosphate + H2O = sucrose + phosphate. The protein operates within glycan biosynthesis; sucrose biosynthesis; sucrose from D-fructose 6-phosphate and UDP-alpha-D-glucose: step 2/2. Catalyzes the final step of sucrose synthesis. This chain is Probable sucrose-phosphatase 3b (SPP3B), found in Arabidopsis thaliana (Mouse-ear cress).